Reading from the N-terminus, the 144-residue chain is Maximins 3/H11 type 1 (144 aa).

Residues 1 to 18 (MNFKYIVAVSFLIASAYA) form the signal peptide. Propeptides lie at residues 19-43 (RSVQ…REIR) and 73-122 (RTAE…KKEK). An Isoleucine amide modification is found at I143.

It belongs to the bombinin family. As to expression, expressed by the skin glands.

It is found in the secreted. Its function is as follows. Maximin-3 shows antibacterial activity against both Gram-positive and Gram-negative bacteria. It also shows antimicrobial activity against the fungus C.albicans, but not against A.flavus nor P.uticale. It has little hemolytic activity. It possess a significant cytotoxicity against tumor cell lines. It possess a significant anti-HIV activity. It shows high spermicidal activity. Maximin-H11 shows antimicrobial activity against bacteria and against the fungus C.albicans. Shows strong hemolytic activity. In Bombina maxima (Giant fire-bellied toad), this protein is Maximins 3/H11 type 1.